The following is a 336-amino-acid chain: Acetyl-coenzyme A carboxylase carboxyl transferase subunit alpha (336 aa).

Positions 48 to 308 constitute a CoA carboxyltransferase C-terminal domain; it reads ALEAKVESLR…KSMLIEELQG (261 aa).

It belongs to the AccA family. In terms of assembly, acetyl-CoA carboxylase is a heterohexamer composed of biotin carboxyl carrier protein (AccB), biotin carboxylase (AccC) and two subunits each of ACCase subunit alpha (AccA) and ACCase subunit beta (AccD).

The protein localises to the cytoplasm. It carries out the reaction N(6)-carboxybiotinyl-L-lysyl-[protein] + acetyl-CoA = N(6)-biotinyl-L-lysyl-[protein] + malonyl-CoA. It functions in the pathway lipid metabolism; malonyl-CoA biosynthesis; malonyl-CoA from acetyl-CoA: step 1/1. Component of the acetyl coenzyme A carboxylase (ACC) complex. First, biotin carboxylase catalyzes the carboxylation of biotin on its carrier protein (BCCP) and then the CO(2) group is transferred by the carboxyltransferase to acetyl-CoA to form malonyl-CoA. This chain is Acetyl-coenzyme A carboxylase carboxyl transferase subunit alpha, found in Chlorobaculum parvum (strain DSM 263 / NCIMB 8327) (Chlorobium vibrioforme subsp. thiosulfatophilum).